Consider the following 696-residue polypeptide: Glycine--tRNA ligase beta subunit (696 aa).

It belongs to the class-II aminoacyl-tRNA synthetase family. As to quaternary structure, tetramer of two alpha and two beta subunits.

The protein resides in the cytoplasm. It catalyses the reaction tRNA(Gly) + glycine + ATP = glycyl-tRNA(Gly) + AMP + diphosphate. The protein is Glycine--tRNA ligase beta subunit of Nitratidesulfovibrio vulgaris (strain ATCC 29579 / DSM 644 / CCUG 34227 / NCIMB 8303 / VKM B-1760 / Hildenborough) (Desulfovibrio vulgaris).